Here is a 514-residue protein sequence, read N- to C-terminus: Peptide chain release factor 3 (514 aa).

Positions 8–268 (KKRRTFAIIS…TFLKFAPEPH (261 aa)) constitute a tr-type G domain. GTP-binding positions include 17–24 (SHPDAGKT), 85–89 (DTPGH), and 139–142 (NKLD).

The protein belongs to the TRAFAC class translation factor GTPase superfamily. Classic translation factor GTPase family. PrfC subfamily.

It is found in the cytoplasm. Functionally, increases the formation of ribosomal termination complexes and stimulates activities of RF-1 and RF-2. It binds guanine nucleotides and has strong preference for UGA stop codons. It may interact directly with the ribosome. The stimulation of RF-1 and RF-2 is significantly reduced by GTP and GDP, but not by GMP. This is Peptide chain release factor 3 from Streptococcus gordonii (strain Challis / ATCC 35105 / BCRC 15272 / CH1 / DL1 / V288).